The chain runs to 259 residues: Dihydroorotate dehydrogenase B (NAD(+)), electron transfer subunit (259 aa).

The region spanning 2-102 is the FAD-binding FR-type domain; it reads MQKQNMIVVN…LGPLGHGFPV (101 aa). FAD is bound by residues 53–56, 70–72, and 77–78; these read RPIS, LYR, and GT. Residues Cys221, Cys226, Cys229, and Cys246 each coordinate [2Fe-2S] cluster.

Belongs to the PyrK family. In terms of assembly, heterotetramer of 2 PyrK and 2 PyrD type B subunits. The cofactor is [2Fe-2S] cluster. Requires FAD as cofactor.

The protein operates within pyrimidine metabolism; UMP biosynthesis via de novo pathway; orotate from (S)-dihydroorotate (NAD(+) route): step 1/1. Functionally, responsible for channeling the electrons from the oxidation of dihydroorotate from the FMN redox center in the PyrD type B subunit to the ultimate electron acceptor NAD(+). The chain is Dihydroorotate dehydrogenase B (NAD(+)), electron transfer subunit from Bacillus cereus (strain ATCC 14579 / DSM 31 / CCUG 7414 / JCM 2152 / NBRC 15305 / NCIMB 9373 / NCTC 2599 / NRRL B-3711).